Reading from the N-terminus, the 234-residue chain is MPWGLAWLYCLGILLDVALGNENLEIWTLAQDKECDLTGYLRGKLQYKNRLQYMKHYFPINYRIAVPYEGVLRVANITRLKAHVSERELRYLWVLVSLNATESVLDVLLEGHPSWKYLQEVQTLLENVQRSLMDVEIGPHVEAVLSLLSTPGLSLKLVRPKALLDNCFRVMELLYCSCCKQSPILKWQDCELPRLHPHSPESLMQCAATNVYPLPRQPPTSLPRSPSSNHGPLP.

The first 20 residues, methionine 1–glycine 20, serve as a signal peptide directing secretion. The N-linked (GlcNAc...) asparagine glycan is linked to asparagine 99. A disordered region spans residues proline 215–proline 234. Polar residues predominate over residues leucine 222–proline 234.

This sequence belongs to the IL-34 family. As to quaternary structure, homodimer. Interacts with CSF1R.

It localises to the secreted. In terms of biological role, cytokine that promotes the proliferation, survival and differentiation of monocytes and macrophages. Promotes the release of pro-inflammatory chemokines, and thereby plays an important role in innate immunity and in inflammatory processes. Plays an important role in the regulation of osteoclast proliferation and differentiation, and in the regulation of bone resorption. Signaling via CSF1R and its downstream effectors stimulates phosphorylation of MAPK1/ERK2 AND MAPK3/ERK1. This is Interleukin-34 (Il34) from Rattus norvegicus (Rat).